The primary structure comprises 275 residues: Large ribosomal subunit protein uL2 (275 aa).

The tract at residues 212–259 is disordered; the sequence is RWKGIRPTNRGVTMNPVDHPHGGGEGKTSGGRHPVTPWGQPTRGYKTR.

It belongs to the universal ribosomal protein uL2 family. Part of the 50S ribosomal subunit. Forms a bridge to the 30S subunit in the 70S ribosome.

Its function is as follows. One of the primary rRNA binding proteins. Required for association of the 30S and 50S subunits to form the 70S ribosome, for tRNA binding and peptide bond formation. It has been suggested to have peptidyltransferase activity; this is somewhat controversial. Makes several contacts with the 16S rRNA in the 70S ribosome. This chain is Large ribosomal subunit protein uL2, found in Acidobacterium capsulatum (strain ATCC 51196 / DSM 11244 / BCRC 80197 / JCM 7670 / NBRC 15755 / NCIMB 13165 / 161).